A 157-amino-acid polypeptide reads, in one-letter code: Small ribosomal subunit protein uS7 (157 aa).

It belongs to the universal ribosomal protein uS7 family. As to quaternary structure, part of the 30S ribosomal subunit. Contacts proteins S9 and S11.

Functionally, one of the primary rRNA binding proteins, it binds directly to 16S rRNA where it nucleates assembly of the head domain of the 30S subunit. Is located at the subunit interface close to the decoding center, probably blocks exit of the E-site tRNA. This Paracidovorax citrulli (strain AAC00-1) (Acidovorax citrulli) protein is Small ribosomal subunit protein uS7.